Here is a 633-residue protein sequence, read N- to C-terminus: Extracellular metalloproteinase 3 (633 aa).

A signal peptide spans methionine 1–alanine 18. A propeptide spanning residues tyrosine 19–serine 246 is cleaved from the precursor. N-linked (GlcNAc...) asparagine glycosylation occurs at asparagine 410. Histidine 429 contributes to the Zn(2+) binding site. The active site involves glutamate 430. Histidine 433 serves as a coordination point for Zn(2+). Residues asparagine 480 and asparagine 622 are each glycosylated (N-linked (GlcNAc...) asparagine).

This sequence belongs to the peptidase M36 family. Zn(2+) is required as a cofactor.

The protein localises to the secreted. In terms of biological role, secreted metalloproteinase probably acting as a virulence factor. The polypeptide is Extracellular metalloproteinase 3 (MEP3) (Trichophyton rubrum (Athlete's foot fungus)).